A 250-amino-acid polypeptide reads, in one-letter code: tRNA (guanine-N(7)-)-methyltransferase (250 aa).

Residues glutamate 79, glutamate 104, aspartate 131, and aspartate 154 each coordinate S-adenosyl-L-methionine. Residue aspartate 154 is part of the active site. Substrate contacts are provided by residues lysine 158, aspartate 190, and 228-231; that span reads TKFE.

It belongs to the class I-like SAM-binding methyltransferase superfamily. TrmB family.

It catalyses the reaction guanosine(46) in tRNA + S-adenosyl-L-methionine = N(7)-methylguanosine(46) in tRNA + S-adenosyl-L-homocysteine. It functions in the pathway tRNA modification; N(7)-methylguanine-tRNA biosynthesis. Functionally, catalyzes the formation of N(7)-methylguanine at position 46 (m7G46) in tRNA. The chain is tRNA (guanine-N(7)-)-methyltransferase from Actinobacillus pleuropneumoniae serotype 5b (strain L20).